The following is a 394-amino-acid chain: Elongation factor Tu (394 aa).

Positions 10–204 constitute a tr-type G domain; the sequence is KPHVNVGTIG…ALDSYIPEPE (195 aa). The tract at residues 19–26 is G1; the sequence is GHVDHGKT. 19 to 26 is a GTP binding site; the sequence is GHVDHGKT. Thr26 provides a ligand contact to Mg(2+). The segment at 60–64 is G2; the sequence is GITIN. The tract at residues 81–84 is G3; that stretch reads DCPG. GTP is bound by residues 81 to 85 and 136 to 139; these read DCPGH and NKCD. Residues 136–139 are G4; the sequence is NKCD. Positions 174–176 are G5; it reads SAL.

This sequence belongs to the TRAFAC class translation factor GTPase superfamily. Classic translation factor GTPase family. EF-Tu/EF-1A subfamily. In terms of assembly, monomer.

Its subcellular location is the cytoplasm. The enzyme catalyses GTP + H2O = GDP + phosphate + H(+). In terms of biological role, GTP hydrolase that promotes the GTP-dependent binding of aminoacyl-tRNA to the A-site of ribosomes during protein biosynthesis. In Shewanella amazonensis (strain ATCC BAA-1098 / SB2B), this protein is Elongation factor Tu.